A 143-amino-acid polypeptide reads, in one-letter code: Transcriptional regulator MraZ (143 aa).

SpoVT-AbrB domains lie at 5–47 and 76–119; these read EYLH…PLDE and ATEC…SQAL.

The protein belongs to the MraZ family. As to quaternary structure, forms oligomers.

It localises to the cytoplasm. The protein localises to the nucleoid. This chain is Transcriptional regulator MraZ, found in Desulfitobacterium hafniense (strain Y51).